The following is a 298-amino-acid chain: MLSFSDILLKLQEFWKNQGCLIVQPYDIPAGAGTFHPATLLRSLDSKPWNVAYVAPSRRPTDGRYGENPNRLGSYYQFQVLIKPSPDNIQELYLRSLEALGLDLKSHDVRFVEDNWESPTLGAWGLGWEVWLDGMEVTQFTYFQQVGGIPCRPVAVEITYGVERLAMYIQSVENIFDILWNDSSNSAPMLYADVHLQSEYEFSKYHFELADTQMIFSLFNQYTQEVKHCLQQKVPLVAYDYTMLASHFFNILDARKAISVAQRQNYILQIRELAKGCATLYKEMEEERTMRREKNKGL.

This sequence belongs to the class-II aminoacyl-tRNA synthetase family. Tetramer of two alpha and two beta subunits.

The protein resides in the cytoplasm. The catalysed reaction is tRNA(Gly) + glycine + ATP = glycyl-tRNA(Gly) + AMP + diphosphate. This chain is Glycine--tRNA ligase alpha subunit, found in Helicobacter hepaticus (strain ATCC 51449 / 3B1).